The primary structure comprises 104 residues: Protein SMALL AUXIN UP-REGULATED RNA 12 (104 aa).

This sequence belongs to the ARG7 family. As to expression, expressed in flowers and etiolated hypocotyls.

The protein localises to the cell membrane. Functionally, provide a mechanistic link between auxin and plasma membrane H(+)-ATPases (PM H(+)-ATPases, e.g. AHA1 and AHA2), and triggers PM H(+)-ATPases activity by promoting phosphorylation of their C-terminal autoinhibitory domain as a result of PP2C-D subfamily of type 2C phosphatases inhibition, thus leading to the acidification of the apoplast and the facilitation of solutes and water uptake to drive cell expansion. Triggers plant growth probably by promoting cell elongation. Regulates branch angles and bending. In Arabidopsis thaliana (Mouse-ear cress), this protein is Protein SMALL AUXIN UP-REGULATED RNA 12.